A 343-amino-acid polypeptide reads, in one-letter code: Melanoma-associated antigen B18 (343 aa).

Basic residues predominate over residues 1–17 (MPRGQKSKLRAREKRHQ). A disordered region spans residues 1 to 102 (MPRGQKSKLR…LGSSREAEGW (102 aa)). Residues 67–87 (APSTTNAIAPVSCSSNEGASS) show a composition bias toward polar residues. Residues 88 to 102 (QDEKSLGSSREAEGW) are compositionally biased toward basic and acidic residues. Positions 100 to 343 (EGWKEDPLNK…TTSSSFSHAK (244 aa)) are interaction with LNX1. Residues 107-306 (LNKKVVSLVH…SAFPSCYEEA (200 aa)) form the MAGE domain. Residues 313–343 (RTQARAAARAHTAAMANARSRTTSSSFSHAK) are disordered. Positions 316-333 (ARAAARAHTAAMANARSR) are enriched in low complexity. Residues 334 to 343 (TTSSSFSHAK) are compositionally biased toward polar residues.

Interacts with LNX1.

It localises to the cytoplasm. Its function is as follows. May enhance ubiquitin ligase activity of RING-type zinc finger-containing E3 ubiquitin-protein ligases. Proposed to act through recruitment and/or stabilization of the Ubl-conjugating enzyme (E2) at the E3:substrate complex. The polypeptide is Melanoma-associated antigen B18 (MAGEB18) (Homo sapiens (Human)).